Here is a 325-residue protein sequence, read N- to C-terminus: Protein ORANGE-ORANGE, chloroplastic (325 aa).

The transit peptide at 1-54 directs the protein to the chloroplast; that stretch reads MDRVLVASYPINHLIRPHSFRIDYCWSTCFTSRLNSGKERQKLSSRWRWRSMAS. Positions 53-71 are enriched in low complexity; sequence ASDSTDSSSSSSFAPSVES. The tract at residues 53–77 is disordered; it reads ASDSTDSSSSSSFAPSVESDPSDKT. Transmembrane regions (helical) follow at residues 164 to 184 and 217 to 237; these read LYYV…GLLA and IVAS…VVEV. Residues 226–317 form a CR-type-like region; that stretch reads VGVISALMVV…CTGMAMASEH (92 aa). The CXXCXGXG motif repeat unit spans residues 248 to 255; the sequence is CKYCLGTG. Residues 259-266 form a CXXCXXXG motif repeat; that stretch reads CARCSNTG. Residues 292–299 form a CXXCXGXG motif repeat; the sequence is CQNCSGSG. One copy of the CXXCXXXG motif repeat lies at 303–310; it reads CPTCLCTG.

Belongs to the orange-like family.

The protein localises to the plastid. Its subcellular location is the chloroplast membrane. Its function is as follows. Triggers accumulation of carotenoids, mainly beta-carotene, in fruit flesh. This is Protein ORANGE-ORANGE, chloroplastic from Cucumis melo (Muskmelon).